The sequence spans 154 residues: Vimentin (154 aa).

Over residues 1 to 13 (MSTRSVSSSSYRR) the composition is skewed to low complexity. Positions 1–31 (MSTRSVSSSSYRRMFGGPGTASRPSSTRSYV) are disordered. Ser2 carries the post-translational modification N-acetylserine. Residues 2–95 (STRSVSSSSY…FSLADAINTE (94 aa)) are head. The residue at position 5 (Ser5) is a Phosphoserine. Phosphoserine; by PKA and PKC; alternate is present on Ser7. Residue Ser7 is glycosylated (O-linked (GlcNAc) serine; alternate). At Ser8 the chain carries Phosphoserine. Ser9 and Ser10 each carry phosphoserine; by PKC. Position 20 is a phosphothreonine (Thr20). A Phosphoserine; by PKA and PKC modification is found at Ser25. Ser26 carries the post-translational modification Phosphoserine; by PKC. Thr33 carries O-linked (GlcNAc) threonine glycosylation. An O-linked (GlcNAc) serine; alternate glycan is attached at Ser34. Residue Ser34 is modified to Phosphoserine; by PKC; alternate. At Ser39 the chain carries Phosphoserine; by CaMK2, PKA, PKC and ROCK2. Phosphoserine; by PKC is present on Ser42. Ser49 is subject to Phosphoserine. Tyr53 is subject to Phosphotyrosine. A Phosphoserine modification is found at Ser55. Ser56 carries the phosphoserine; by CDK5 and CDK1 modification. Phosphotyrosine is present on Tyr61. Ser66 is modified (phosphoserine; by PKA and PKC). Ser72 is subject to Phosphoserine; by AURKB and ROCK2. At Ser83 the chain carries Phosphoserine; by CaMK2. Phosphoserine is present on Ser87. Positions 96–131 (FKNTRTNEKVELQELNDRFANYIDKVRFLEQQNKIL) are coil 1A. Residues 96–131 (FKNTRTNEKVELQELNDRFANYIDKVRFLEQQNKIL) are a coiled coil. In terms of domain architecture, IF rod spans 103–154 (EKVELQELNDRFANYIDKVRFLEQQNKILLAELEQLKGQGKSRLGHLYEEEM). Lys104 is covalently cross-linked (Glycyl lysine isopeptide (Lys-Gly) (interchain with G-Cter in SUMO2)). Phosphotyrosine is present on Tyr117. Residues Lys120, Lys129, and Lys139 each carry the N6-acetyllysine; alternate modification. Lys120 and Lys129 each carry N6-succinyllysine; alternate. Residues Lys120, Lys129, and Lys139 each participate in a glycyl lysine isopeptide (Lys-Gly) (interchain with G-Cter in SUMO2); alternate cross-link. Positions 132-153 (LAELEQLKGQGKSRLGHLYEEE) are linker 1. Ser144 is subject to Phosphoserine. Met154 is a region of interest (coil 1B).

This sequence belongs to the intermediate filament family. In terms of assembly, homomer assembled from elementary dimers. Identified in complexes that contain VIM, EZR, AHNAK, BFSP1, BFSP2, ANK2, PLEC, PRX and spectrin. Interacts with BCAS3. Interacts with LGSN. Interacts with SYNM. Interacts (via rod region) with PLEC (via CH 1 domain). Interacts with STK33. Interacts with LARP6. Interacts with RAB8B. Interacts with TOR1A; the interaction associates TOR1A with the cytoskeleton. Interacts with TOR1AIP1. Interacts with TOR1AIP1. Interacts with DIAPH1. Interacts with EPPK1; interaction is dependent of higher-order structure of intermediate filament. Interacts with the non-receptor tyrosine kinase SRMS; the interaction leads to phosphorylation of VIM. Interacts with NOD2. Interacts (via head region) with CORO1C. Interacts with HDGF. Interacts with PRKCE (via phorbol-ester/DAG-type 2 domain). Interacts with BFSP2. Interacts with PPL. Interacts with PKP1 and PKP2. Interacts with SCRIB (via PDZ domains); the interaction protects SCRIB from proteasomal degradation and facilitates SCRIB localization to intermediate filaments, the interaction is reduced by cell contact inhibition. One of the most prominent phosphoproteins in various cells of mesenchymal origin. Phosphorylation is enhanced during cell division, at which time vimentin filaments are significantly reorganized. Phosphorylation by PKN1 inhibits the formation of filaments. Filament disassembly during mitosis is promoted by phosphorylation at Ser-55 as well as by nestin. Phosphorylated at Ser-56 by CDK5 during neutrophil secretion in the cytoplasm. Phosphorylated by STK33. Phosphorylated on tyrosine residues by SRMS.

The protein localises to the cytoplasm. Its subcellular location is the cytoskeleton. The protein resides in the nucleus matrix. It is found in the cell membrane. Functionally, vimentins are class-III intermediate filaments found in various non-epithelial cells, especially mesenchymal cells. Vimentin is attached to the nucleus, endoplasmic reticulum, and mitochondria, either laterally or terminally. Plays a role in cell directional movement, orientation, cell sheet organization and Golgi complex polarization at the cell migration front. Protects SCRIB from proteasomal degradation and facilitates its localization to intermediate filaments in a cell contact-mediated manner. Involved with LARP6 in the stabilization of type I collagen mRNAs for CO1A1 and CO1A2. In Ovis aries (Sheep), this protein is Vimentin (VIM).